The primary structure comprises 210 residues: MRYPFLRLAVFLAACIAPVWWLYQAWIFALGPDPGKVLVENFGVATLVMLLITLSMTPLQRLTGWSGWIVVRRQLGLWCFAYALLHLSMYALFILGLDWGQLGVELVKRPYIIVGALALLGLLALAVTSNRYSQRRLGARWKKLHRIIYVILGLGLLHMFWIVRADLKEWALYAGIGAFLLLLRIPVFARRIPRLGGAAKARSVKVQNNG.

6 helical membrane passes run 8–28 (LAVF…AWIF), 37–57 (VLVE…LSMT), 75–95 (LGLW…LFIL), 110–130 (PYII…VTSN), 147–167 (IIYV…RADL), and 169–189 (EWAL…PVFA).

It belongs to the MsrQ family. As to quaternary structure, heterodimer of a catalytic subunit (MsrP) and a heme-binding subunit (MsrQ). FMN is required as a cofactor. Heme b serves as cofactor.

It localises to the cell inner membrane. In terms of biological role, part of the MsrPQ system that repairs oxidized periplasmic proteins containing methionine sulfoxide residues (Met-O), using respiratory chain electrons. Thus protects these proteins from oxidative-stress damage caused by reactive species of oxygen and chlorine generated by the host defense mechanisms. MsrPQ is essential for the maintenance of envelope integrity under bleach stress, rescuing a wide series of structurally unrelated periplasmic proteins from methionine oxidation. MsrQ provides electrons for reduction to the reductase catalytic subunit MsrP, using the quinone pool of the respiratory chain. The sequence is that of Protein-methionine-sulfoxide reductase heme-binding subunit MsrQ from Pseudomonas syringae pv. syringae (strain B728a).